We begin with the raw amino-acid sequence, 79 residues long: Sec-independent protein translocase protein TatA (79 aa).

The chain crosses the membrane as a helical span at residues 1 to 21 (MGSLSIWHWIVVIAVILLLFG). The span at 43–60 (MQDDEKTAEKPEPVKTID) shows a compositional bias: basic and acidic residues. The interval 43 to 79 (MQDDEKTAEKPEPVKTIDHNAPAPGASRSDVGSKTTV) is disordered.

This sequence belongs to the TatA/E family. As to quaternary structure, the Tat system comprises two distinct complexes: a TatABC complex, containing multiple copies of TatA, TatB and TatC subunits, and a separate TatA complex, containing only TatA subunits. Substrates initially bind to the TatABC complex, which probably triggers association of the separate TatA complex to form the active translocon.

The protein resides in the cell inner membrane. Part of the twin-arginine translocation (Tat) system that transports large folded proteins containing a characteristic twin-arginine motif in their signal peptide across membranes. TatA could form the protein-conducting channel of the Tat system. This Nitrobacter hamburgensis (strain DSM 10229 / NCIMB 13809 / X14) protein is Sec-independent protein translocase protein TatA.